The primary structure comprises 180 residues: Der GTPase-activating protein YihI (180 aa).

A compositionally biased stretch (polar residues) spans 1–10 (MKQPARTSQV). 2 disordered regions span residues 1–102 (MKQP…PRLT) and 158–180 (DAED…RTPE). The segment covering 21–32 (TREEINQEARDR) has biased composition (basic and acidic residues). Over residues 45 to 54 (SRANPATVSQ) the composition is skewed to polar residues. Over residues 55 to 67 (KGDKSQSVKDPRI) the composition is skewed to basic and acidic residues. Residues 84 to 93 (PANPVKAAKP) show a composition bias toward low complexity.

Belongs to the YihI family. Interacts with Der.

A GTPase-activating protein (GAP) that modifies Der/EngA GTPase function. May play a role in ribosome biogenesis. This Erwinia tasmaniensis (strain DSM 17950 / CFBP 7177 / CIP 109463 / NCPPB 4357 / Et1/99) protein is Der GTPase-activating protein YihI.